Reading from the N-terminus, the 144-residue chain is Austinoid biosynthesis cluster protein S (144 aa).

The protein belongs to the trt14 isomerase family. As to quaternary structure, homodimer.

The protein operates within secondary metabolite biosynthesis; terpenoid biosynthesis. Part of the gene cluster that mediates the biosynthesis of calidodehydroaustin, a fungal meroterpenoid. The first step of the pathway is the synthesis of 3,5-dimethylorsellinic acid by the polyketide synthase ausA. 3,5-dimethylorsellinic acid is then prenylated by the polyprenyl transferase ausN. Further epoxidation by the FAD-dependent monooxygenase ausM and cyclization by the probable terpene cyclase ausL lead to the formation of protoaustinoid A. Protoaustinoid A is then oxidized to spiro-lactone preaustinoid A3 by the combined action of the FAD-binding monooxygenases ausB and ausC, and the dioxygenase ausE. Acid-catalyzed keto-rearrangement and ring contraction of the tetraketide portion of preaustinoid A3 by ausJ lead to the formation of preaustinoid A4. The aldo-keto reductase ausK, with the help of ausH, is involved in the next step by transforming preaustinoid A4 into isoaustinone which is in turn hydroxylated by the P450 monooxygenase ausI to form austinolide. The cytochrome P450 monooxygenase ausG modifies austinolide to austinol. Austinol is further acetylated to austin by the O-acetyltransferase ausP, which spontaneously changes to dehydroaustin. The cytochrome P450 monooxygenase ausR then converts dehydroaustin is into 7-dehydrodehydroaustin. The hydroxylation catalyzed by ausR permits the O-acetyltransferase ausQ to add an additional acetyl group to the molecule, leading to the formation of acetoxydehydroaustin. The short chain dehydrogenase ausT catalyzes the reduction of the double bond present between carbon atoms 1 and 2 to convert 7-dehydrodehydroaustin into 1,2-dihydro-7-hydroxydehydroaustin. AusQ catalyzes not only an acetylation reaction but also the addition of the PKS ausV diketide product to 1,2-dihydro-7-hydroxydehydroaustin, forming precalidodehydroaustin. Finally, the iron/alpha-ketoglutarate-dependent dioxygenase converts precalidodehydroaustin into calidodehydroaustin. AusS is necessary for austinoids production and may play a possible function as a regulator. Its function is as follows. May play a possible function as a regulator. This Aspergillus calidoustus protein is Austinoid biosynthesis cluster protein S.